The primary structure comprises 743 residues: Phosphoribosylformylglycinamidine synthase subunit PurL (743 aa).

His50 is an active-site residue. Residues Tyr53 and Lys92 each coordinate ATP. Glu94 is a binding site for Mg(2+). Residues 95–98 (SHNH) and Arg117 contribute to the substrate site. His96 (proton acceptor) is an active-site residue. Asp118 is a Mg(2+) binding site. A substrate-binding site is contributed by Gln241. Asp269 provides a ligand contact to Mg(2+). Residue 313–315 (ESQ) participates in substrate binding. Positions 495 and 532 each coordinate ATP. Asn533 is a Mg(2+) binding site. A substrate-binding site is contributed by Ser535.

Belongs to the FGAMS family. As to quaternary structure, monomer. Part of the FGAM synthase complex composed of 1 PurL, 1 PurQ and 2 PurS subunits.

The protein localises to the cytoplasm. It carries out the reaction N(2)-formyl-N(1)-(5-phospho-beta-D-ribosyl)glycinamide + L-glutamine + ATP + H2O = 2-formamido-N(1)-(5-O-phospho-beta-D-ribosyl)acetamidine + L-glutamate + ADP + phosphate + H(+). It participates in purine metabolism; IMP biosynthesis via de novo pathway; 5-amino-1-(5-phospho-D-ribosyl)imidazole from N(2)-formyl-N(1)-(5-phospho-D-ribosyl)glycinamide: step 1/2. Its function is as follows. Part of the phosphoribosylformylglycinamidine synthase complex involved in the purines biosynthetic pathway. Catalyzes the ATP-dependent conversion of formylglycinamide ribonucleotide (FGAR) and glutamine to yield formylglycinamidine ribonucleotide (FGAM) and glutamate. The FGAM synthase complex is composed of three subunits. PurQ produces an ammonia molecule by converting glutamine to glutamate. PurL transfers the ammonia molecule to FGAR to form FGAM in an ATP-dependent manner. PurS interacts with PurQ and PurL and is thought to assist in the transfer of the ammonia molecule from PurQ to PurL. The sequence is that of Phosphoribosylformylglycinamidine synthase subunit PurL from Rhizobium etli (strain CIAT 652).